The primary structure comprises 579 residues: Mitochondrial distribution and morphology protein 36 (579 aa).

The disordered stretch occupies residues 1–27 (MDENGTVKPGYELKGLNSGNSRSNMDK). S42 carries the post-translational modification Phosphoserine. 2 disordered regions span residues 378-401 (TPINSSDSDNLSNGEIDRLDGRRL) and 446-518 (DNKH…ESQS). The segment covering 379–390 (PINSSDSDNLSN) has biased composition (polar residues). Basic and acidic residues predominate over residues 446 to 463 (DNKHSTKDTDSNIRRNEH). The span at 495–518 (PSQSSSRMSTLPLSPSSSLLESQS) shows a compositional bias: low complexity.

Involved in mitochondrial distribution and morphology. This Saccharomyces cerevisiae (strain ATCC 204508 / S288c) (Baker's yeast) protein is Mitochondrial distribution and morphology protein 36 (MDM36).